The chain runs to 873 residues: Bifunctional uridylyltransferase/uridylyl-removing enzyme (873 aa).

Residues 1–332 form a uridylyltransferase region; sequence MKYLSPLSLS…HQGEQDDAII (332 aa). The tract at residues 333 to 692 is uridylyl-removing; the sequence is IDDDFQRRGR…ISKNASRGGT (360 aa). Residues 451 to 573 enclose the HD domain; that stretch reads VDEHSIRLLK…VRDEERLDYL (123 aa). 2 consecutive ACT domains span residues 693–777 and 800–873; these read EIFV…RPPR and LMEF…RLSS.

The protein belongs to the GlnD family. Mg(2+) serves as cofactor.

The catalysed reaction is [protein-PII]-L-tyrosine + UTP = [protein-PII]-uridylyl-L-tyrosine + diphosphate. It carries out the reaction [protein-PII]-uridylyl-L-tyrosine + H2O = [protein-PII]-L-tyrosine + UMP + H(+). With respect to regulation, uridylyltransferase (UTase) activity is inhibited by glutamine, while glutamine activates uridylyl-removing (UR) activity. Functionally, modifies, by uridylylation and deuridylylation, the PII regulatory proteins (GlnB and homologs), in response to the nitrogen status of the cell that GlnD senses through the glutamine level. Under low glutamine levels, catalyzes the conversion of the PII proteins and UTP to PII-UMP and PPi, while under higher glutamine levels, GlnD hydrolyzes PII-UMP to PII and UMP (deuridylylation). Thus, controls uridylylation state and activity of the PII proteins, and plays an important role in the regulation of nitrogen assimilation and metabolism. The chain is Bifunctional uridylyltransferase/uridylyl-removing enzyme from Aliivibrio fischeri (strain MJ11) (Vibrio fischeri).